Reading from the N-terminus, the 104-residue chain is Histone-like protein p6 (104 aa).

Residues 1–19 (MAKMMQREITKTTVNVAKM) mediate DNA binding. A disordered region spans residues 85–104 (VEKDEDQEEQTEAPEEQVAE). Positions 88 to 104 (DEDQEEQTEAPEEQVAE) are enriched in acidic residues.

It belongs to the phi29likevirus histone-like protein p6 family. In terms of assembly, homodimer. Homomultimer. Binds to double-stranded DNA giving rise to multimeric nucleoprotein complexes. Binding specificity for the viral DNA is based on supercoiling, the viral genome having a negative superhelicity lower than that of plasmid DNA. Interacts with the DNA replication protein p17; this interaction optimizes the binding of protein p6 at the viral DNA ends, thus favoring the initiation of replication. Interacts with the late genes activator p4 (via C-terminus).

Its function is as follows. Histone-like nucleoprotein that binds to the viral dsDNA and responsible for wrapping and compacting the viral DNA about 4-fold. Forms a nucleoprotein complex in which the DNA adopts a right-handed toroidal conformation winding around a protein core. Binds ito most, if not all, the viral genome, although with different affinity, the highest one corresponding to the genome ends. The formation of the nucleoprotein complex at the genome ends, activates the initiation of viral DNA replication. The binding of p6 would recruit the complex formed by the TP and the DNA polymerase to the origin. Protein p6 also represses early transcription from promoter C2, and, together with protein p4, represses transcription from promoters A2b and A2c and activates late transcription from promoter A3. Protein p6 is therefore involved in the early to late transcription switch. The formation of the nucleoprotein complex at the right end of the phage genome where the early promoter C2 is located affects local topology, which may contribute to the promoter repression. The chain is Histone-like protein p6 (6) from Bacillus subtilis (Bacteriophage phi-29).